Reading from the N-terminus, the 62-residue chain is Photosystem II reaction center protein Z (62 aa).

A run of 2 helical transmembrane segments spans residues 8–28 and 41–61; these read SVFALIAISTLLVIGVPVALA and FSGVSLWIGSVFLVGILNSFI.

The protein belongs to the PsbZ family. As to quaternary structure, PSII is composed of 1 copy each of membrane proteins PsbA, PsbB, PsbC, PsbD, PsbE, PsbF, PsbH, PsbI, PsbJ, PsbK, PsbL, PsbM, PsbT, PsbY, PsbZ, Psb30/Ycf12, at least 3 peripheral proteins of the oxygen-evolving complex and a large number of cofactors. It forms dimeric complexes.

Its subcellular location is the plastid. The protein resides in the chloroplast thylakoid membrane. Functionally, may control the interaction of photosystem II (PSII) cores with the light-harvesting antenna, regulates electron flow through the 2 photosystem reaction centers. PSII is a light-driven water plastoquinone oxidoreductase, using light energy to abstract electrons from H(2)O, generating a proton gradient subsequently used for ATP formation. The protein is Photosystem II reaction center protein Z of Cryptomeria japonica (Japanese cedar).